A 135-amino-acid polypeptide reads, in one-letter code: MLSPKRTRFRKQHRGRMKGISYRGNRICFGRYALQALEPAWITSRQIEAGRRAMTRNARRGGKIWVRIFPDKPVTVRPAETRMGSGKGSPEYWVAVVKPGRILYEISGVAENIARRAVAIAASKMPIRTQFIISG.

Met-1 bears the N-methylmethionine mark.

Component of the chloroplast large ribosomal subunit (LSU). Mature 70S chloroplast ribosomes of higher plants consist of a small (30S) and a large (50S) subunit. The 30S small subunit contains 1 molecule of ribosomal RNA (16S rRNA) and 24 different proteins. The 50S large subunit contains 3 rRNA molecules (23S, 5S and 4.5S rRNA) and 33 different proteins. Post-translationally, partially alpha-N-monomethylated at Met-1 (10%), whereas 90% of it is blocked to Edman degradation, probably by trimethylation.

It localises to the plastid. Its subcellular location is the chloroplast. Its function is as follows. Component of the chloroplast ribosome (chloro-ribosome), a dedicated translation machinery responsible for the synthesis of chloroplast genome-encoded proteins, including proteins of the transcription and translation machinery and components of the photosynthetic apparatus. In Spinacia oleracea (Spinach), this protein is Large ribosomal subunit protein uL16c.